Reading from the N-terminus, the 104-residue chain is Flagellar hook-basal body complex protein FliE (104 aa).

This sequence belongs to the FliE family.

The protein resides in the bacterial flagellum basal body. This Escherichia coli (strain 55989 / EAEC) protein is Flagellar hook-basal body complex protein FliE.